The sequence spans 82 residues: Musculoskeletal embryonic nuclear protein 1 (82 aa).

2 disordered regions span residues 1 to 33 (MSQA…LTKN) and 49 to 82 (QAGS…SVFG). Position 2 is a phosphoserine (S2). The short motif at 10–18 (PIKKKRPPV) is the Nuclear localization signal element.

The protein belongs to the MUSTN1 family. As to expression, expression in skeletal muscle is reduced during limb unloading but increases during the active recovery phase that follows.

The protein resides in the nucleus. The protein localises to the cytoplasm. Its subcellular location is the secreted. It is found in the extracellular space. Functionally, required for chondrocyte development and proliferation. Plays a role in myoblast differentiation and fusion. Modulates skeletal muscle extracellular matrix composition. Plays a role in skeletal muscle function. Plays a role in glucose homeostasis. This Homo sapiens (Human) protein is Musculoskeletal embryonic nuclear protein 1 (MUSTN1).